Consider the following 438-residue polypeptide: Lipid-A-disaccharide synthase (438 aa).

The protein belongs to the LpxB family.

The catalysed reaction is a lipid X + a UDP-2-N,3-O-bis[(3R)-3-hydroxyacyl]-alpha-D-glucosamine = a lipid A disaccharide + UDP + H(+). Its pathway is bacterial outer membrane biogenesis; LPS lipid A biosynthesis. In terms of biological role, condensation of UDP-2,3-diacylglucosamine and 2,3-diacylglucosamine-1-phosphate to form lipid A disaccharide, a precursor of lipid A, a phosphorylated glycolipid that anchors the lipopolysaccharide to the outer membrane of the cell. The chain is Lipid-A-disaccharide synthase from Xanthomonas campestris pv. campestris (strain 8004).